The sequence spans 139 residues: Large ribosomal subunit protein bL17 (139 aa).

This sequence belongs to the bacterial ribosomal protein bL17 family. In terms of assembly, part of the 50S ribosomal subunit. Contacts protein L32.

This chain is Large ribosomal subunit protein bL17, found in Cereibacter sphaeroides (strain ATCC 17025 / ATH 2.4.3) (Rhodobacter sphaeroides).